The chain runs to 800 residues: Chondroitin sulfate synthase 1 (800 aa).

The Cytoplasmic portion of the chain corresponds to 1 to 7 (MAARGRR). A helical; Signal-anchor for type II membrane protein transmembrane segment spans residues 8-28 (AWLSMLLGLVLGFVLASRLVL). Over 29–800 (PRASELKRVG…GGSHGSARTA (772 aa)) the chain is Lumenal. The interval 36–66 (RVGPRRRPSPEGCRPGQEASQPGGARGDARG) is disordered. Asparagine 188 and asparagine 622 each carry an N-linked (GlcNAc...) asparagine glycan. A divalent metal cation is bound by residues aspartate 632 and histidine 746.

This sequence belongs to the chondroitin N-acetylgalactosaminyltransferase family. It depends on Co(2+) as a cofactor. Requires Mn(2+) as cofactor. Cd(2+) serves as cofactor.

The protein localises to the golgi apparatus. Its subcellular location is the golgi stack membrane. The protein resides in the secreted. The enzyme catalyses 3-O-(beta-D-GlcA-(1-&gt;3)-beta-D-GalNAc-(1-&gt;4)-beta-D-GlcA-(1-&gt;3)-beta-D-Gal-(1-&gt;3)-beta-D-Gal-(1-&gt;4)-beta-D-Xyl)-L-seryl-[protein] + UDP-N-acetyl-alpha-D-galactosamine = 3-O-(beta-D-GalNAc-(1-&gt;4)-beta-D-GlcA-(1-&gt;3)-beta-D-GalNAc-(1-&gt;4)-beta-D-GlcA-(1-&gt;3)-beta-D-Gal-(1-&gt;3)-beta-D-Gal-(1-&gt;4)-beta-D-Xyl)-L-seryl-[protein] + UDP + H(+). The catalysed reaction is 3-O-{beta-D-GlcA-(1-&gt;3)-[beta-D-GalNAc-(1-&gt;4)-beta-D-GlcA-(1-&gt;3)](n)-beta-D-GalNAc-(1-&gt;4)-beta-D-GlcA-(1-&gt;3)-beta-D-Gal-(1-&gt;3)-beta-D-Gal-(1-&gt;4)-beta-D-Xyl}-L-seryl-[protein] + UDP-N-acetyl-alpha-D-galactosamine = 3-O-{[beta-D-GalNAc-(1-&gt;4)-beta-D-GlcA-(1-&gt;3)](n+1)-beta-D-GalNAc-(1-&gt;4)-beta-D-GlcA-(1-&gt;3)-beta-D-Gal-(1-&gt;3)-beta-D-Gal-(1-&gt;4)-beta-D-Xyl}-L-seryl-[protein] + UDP + H(+). It catalyses the reaction 3-O-(beta-D-GalNAc-(1-&gt;4)-beta-D-GlcA-(1-&gt;3)-beta-D-Gal-(1-&gt;3)-beta-D-Gal-(1-&gt;4)-beta-D-Xyl)-L-seryl-[protein] + UDP-alpha-D-glucuronate = 3-O-(beta-D-GlcA-(1-&gt;3)-beta-D-GalNAc-(1-&gt;4)-beta-D-GlcA-(1-&gt;3)-beta-D-Gal-(1-&gt;3)-beta-D-Gal-(1-&gt;4)-beta-D-Xyl)-L-seryl-[protein] + UDP + H(+). It carries out the reaction 3-O-{[beta-D-GalNAc-(1-&gt;4)-beta-D-GlcA-(1-&gt;3)](n)-beta-D-GalNAc-(1-&gt;4)-beta-D-GlcA-(1-&gt;3)-beta-D-Gal-(1-&gt;3)-beta-D-Gal-(1-&gt;4)-beta-D-Xyl}-L-seryl-[protein] + UDP-alpha-D-glucuronate = 3-O-{beta-D-GlcA-(1-&gt;3)-[beta-D-GalNAc-(1-&gt;4)-beta-D-GlcA-(1-&gt;3)](n)-beta-D-GalNAc-(1-&gt;4)-beta-D-GlcA-(1-&gt;3)-beta-D-Gal-(1-&gt;3)-beta-D-Gal-(1-&gt;4)-beta-D-Xyl}-L-seryl-[protein] + UDP + H(+). Functionally, has both beta-1,3-glucuronic acid and beta-1,4-N-acetylgalactosamine transferase activity. Transfers glucuronic acid (GlcUA) from UDP-GlcUA and N-acetylgalactosamine (GalNAc) from UDP-GalNAc to the non-reducing end of the elongating chondroitin polymer. Involved in the negative control of osteogenesis likely through the modulation of NOTCH signaling. The protein is Chondroitin sulfate synthase 1 (Chsy1) of Mus musculus (Mouse).